The primary structure comprises 203 residues: Thymidylate kinase (203 aa).

10–17 provides a ligand contact to ATP; the sequence is GVEGSGKT.

The protein belongs to the thymidylate kinase family.

It carries out the reaction dTMP + ATP = dTDP + ADP. In terms of biological role, phosphorylation of dTMP to form dTDP in both de novo and salvage pathways of dTTP synthesis. This Carboxydothermus hydrogenoformans (strain ATCC BAA-161 / DSM 6008 / Z-2901) protein is Thymidylate kinase.